A 1082-amino-acid polypeptide reads, in one-letter code: SURP and G-patch domain-containing protein 2 (1082 aa).

A Phosphothreonine modification is found at Thr-7. Residues 65–97 (LSGSVAHSRDAGREGLRSDVFPGPSFRSSNPSI) are disordered. Positions 71-81 (HSRDAGREGLR) are enriched in basic and acidic residues. Residues Ser-96 and Ser-224 each carry the phosphoserine modification. Residue Lys-228 forms a Glycyl lysine isopeptide (Lys-Gly) (interchain with G-Cter in SUMO2) linkage. Thr-275 carries the post-translational modification Phosphothreonine. Ser-277 bears the Phosphoserine mark. Lys-305 is covalently cross-linked (Glycyl lysine isopeptide (Lys-Gly) (interchain with G-Cter in SUMO2)). Phosphoserine occurs at positions 315, 573, and 603. The stretch at 590 to 633 (IDQLVKRVIEGSLSPKERTLLKEDPAYWFLSDENSLEYKYYKLK) is one SURP motif 1 repeat. Lys-650 participates in a covalent cross-link: Glycyl lysine isopeptide (Lys-Gly) (interchain with G-Cter in SUMO2). Residues 694–779 (RRATTGTQTL…QTSSPCPSAD (86 aa)) form a disordered region. Low complexity predominate over residues 697–708 (TTGTQTLLSSGT). Residues 727–738 (LPDRNDAAKDCP) show a composition bias toward basic and acidic residues. A phosphoserine mark is found at Ser-754 and Ser-757. The stretch at 787–830 (TAEKLARFVAQVGPEIEQFSIENSTDNPDLWFLHDQNSSAFKFY) is one SURP motif 2 repeat. Disordered stretches follow at residues 849 to 930 (NLHT…EAAE), 982 to 1002 (RIAY…PKDL), and 1030 to 1061 (LGSL…EHKE). Residue Ser-863 is modified to Phosphoserine. Acidic residues-rich tracts occupy residues 868–877 (MEGEAEFEDE) and 885–904 (LESP…DGGE). Basic residues predominate over residues 990–999 (GRPMSKKKKP). Residues 995 to 1000 (KKKKPK) carry the Nuclear localization signal motif. One can recognise a G-patch domain in the interval 1011 to 1057 (DKNLGFQMLQKMGWKEGHGLGSLGKGIREPVSVGTPSEGEGLGADGQ).

Detected in adult testis, and in fetal brain and kidney.

It localises to the nucleus. May play a role in mRNA splicing. The chain is SURP and G-patch domain-containing protein 2 (SUGP2) from Homo sapiens (Human).